Here is a 104-residue protein sequence, read N- to C-terminus: Large ribosomal subunit protein uL23 (104 aa).

This sequence belongs to the universal ribosomal protein uL23 family. As to quaternary structure, part of the 50S ribosomal subunit. Contacts protein L29, and trigger factor when it is bound to the ribosome.

Functionally, one of the early assembly proteins it binds 23S rRNA. One of the proteins that surrounds the polypeptide exit tunnel on the outside of the ribosome. Forms the main docking site for trigger factor binding to the ribosome. In Nostoc punctiforme (strain ATCC 29133 / PCC 73102), this protein is Large ribosomal subunit protein uL23.